A 275-amino-acid chain; its full sequence is Prohibitin-1 (275 aa).

Residues 106–109 carry the AIM motif; the sequence is YQNL.

It belongs to the prohibitin family. In terms of assembly, the mitochondrial prohibitin complex consists of two subunits (PHB1 and PHB2). The subunits assemble into a membrane-associated ring-shaped supercomplex of approximately 1 mDa. Interacts with ATG24/SNX4; the interaction is direct and plays a role in mitophagy.

The protein resides in the mitochondrion inner membrane. In terms of biological role, prohibitin probably acts as a holdase/unfoldase for the stabilization of newly synthesized mitochondrial proteins. Involved in mitophagy. Required for the switch to necrotrophic growth. This chain is Prohibitin-1, found in Colletotrichum higginsianum (strain IMI 349063) (Crucifer anthracnose fungus).